The sequence spans 249 residues: Mediator of RNA polymerase II transcription subunit 19 (249 aa).

2 disordered regions span residues 1 to 68 and 178 to 249; these read MEGF…SSRR and QPPK…SGLR. Positions 9–18 are enriched in low complexity; the sequence is AASEPSSIPS. Positions 45–56 are enriched in pro residues; it reads VPGPPLPIPPPL. Basic residues-rich tracts occupy residues 179-190 and 221-233; these read PPKKKNKKHKQS and RRKK…KKSR.

It belongs to the Mediator complex subunit 19 family. Component of the Mediator complex.

Its subcellular location is the nucleus. In terms of biological role, component of the Mediator complex, a coactivator involved in the regulated transcription of nearly all RNA polymerase II-dependent genes. Mediator functions as a bridge to convey information from gene-specific regulatory proteins to the basal RNA polymerase II transcription machinery. Mediator is recruited to promoters by direct interactions with regulatory proteins and serves as a scaffold for the assembly of a functional preinitiation complex with RNA polymerase II and the general transcription factors. The protein is Mediator of RNA polymerase II transcription subunit 19 (med19) of Xenopus tropicalis (Western clawed frog).